The primary structure comprises 113 residues: Early nodulin-12B (113 aa).

The N-terminal stretch at 1–24 (MASFSLSILVFFISALVLVPQGFA) is a signal peptide. Residues 29 to 113 (NPAYRPPQTK…HPPAEDNIHF (85 aa)) form a disordered region. Residues 32–42 (YRPPQTKPPVN) are compositionally biased toward pro residues. 2 repeat units span residues 34–38 (PPQTK) and 39–43 (PPVNK). The interval 34-109 (PPQTKPPVNK…PTHKHPPAED (76 aa)) is 15 X 5 AA approximate tandem repeats of P-P-[QVHRTA]-[NHKE]-[KEDT]. The stretch at 44–48 (PSHKE) is one 3; approximate repeat. 2 stretches are compositionally biased toward basic and acidic residues: residues 45-60 (SHKE…KEPP) and 67-113 (KEPP…NIHF). 3 repeat units span residues 49 to 53 (PPVHK), 54 to 58 (PPHKE), and 59 to 63 (PPVNK). The stretch at 64–68 (PRHKE) is one 7; approximate repeat. 4 consecutive repeat copies span residues 69 to 73 (PPVHK), 74 to 78 (PPHKD), 79 to 83 (PPVNK), and 84 to 88 (PPQKE). Residues 89–93 (SPVHK) form a 12; approximate repeat. Repeat copies occupy residues 94 to 98 (PPRKE), 99 to 103 (PPTHK), and 105 to 109 (PPAED).

The protein belongs to the plant proline-rich protein superfamily. ENOD12 family. Expressed only in young nodules.

Its subcellular location is the secreted. It is found in the cell wall. Involved in the infection process during the plant-rhizobium interaction. The chain is Early nodulin-12B (ENOD12B) from Medicago sativa (Alfalfa).